Here is a 127-residue protein sequence, read N- to C-terminus: Modulator protein MzrA (127 aa).

At 1-10 the chain is on the cytoplasmic side; it reads MLKPRITARQ. The chain crosses the membrane as a helical span at residues 11 to 31; sequence LIWISAFLLMLTILMMTWSTL. Over 32-127 the chain is Periplasmic; that stretch reads RQQESTLAIR…RLRESSHRFG (96 aa).

This sequence belongs to the MzrA family. As to quaternary structure, interacts with EnvZ.

The protein resides in the cell inner membrane. In terms of biological role, modulates the activity of the EnvZ/OmpR two-component regulatory system, probably by directly modulating EnvZ enzymatic activity and increasing stability of phosphorylated OmpR. In Salmonella agona (strain SL483), this protein is Modulator protein MzrA.